Consider the following 341-residue polypeptide: MKALSKLKAQPGIWMTDVPVPELGHNDVMIKIRKTAICGTDVHIYNWDEWSQKTIPVPMVVGHEYIGEIVAIGQEVKGFNIGDRVSGEGHITCGHCRNCRGGRTHLCRNTIGVGVNRPGCFAEYLVIPAFNAFKIPDNIPDELAAIFDPFGNAVHTALSFDLVGEDVLVSGAGPIGIMAAAICKHVGARHVVITDVNEYRLDLAKKMGVTRAVNVSKENLTDVMKELGMTEGFDVGLEMSGAPPAFRTMLSTMNHGGRIALLGIPPSDMAIDWGQVIFKGLFIKGIYGREMFETWYKMAALIQSGLDLSPIITHQFPIDEFQKGFDIMRSGQSGKVILDWQ.

Residue Cys38 participates in Zn(2+) binding. Residues Thr40 and His43 each act as charge relay system in the active site. 6 residues coordinate Zn(2+): His63, Glu64, Cys93, Cys96, Cys99, and Cys107. NAD(+) is bound by residues Ile175, Asp195, Arg200, 262–264 (LGI), and 286–287 (IY).

It belongs to the zinc-containing alcohol dehydrogenase family. As to quaternary structure, homotetramer. The cofactor is Zn(2+).

It is found in the cytoplasm. The catalysed reaction is L-threonine + NAD(+) = (2S)-2-amino-3-oxobutanoate + NADH + H(+). The protein operates within amino-acid degradation; L-threonine degradation via oxydo-reductase pathway; glycine from L-threonine: step 1/2. Functionally, catalyzes the NAD(+)-dependent oxidation of L-threonine to 2-amino-3-ketobutyrate. This is L-threonine 3-dehydrogenase from Proteus mirabilis (strain HI4320).